Reading from the N-terminus, the 315-residue chain is MSQPTPAVRTFQDLILALQNYWAAQGCVVLQPYDMEVGAGTFHTATFLRAVGPETWNAAYVQPSRRPADGRYGENPNRLQHYYQFQVVLKPNPANFQELYLGSLKAIGLDPLVHDIRFVEDNWESPTLGAWGLGWEIWLNGMEVTQFTYFQQVGGIECYPVTGEITYGLERLAMYIQGVDSVYDLVWADGPFGKVTYGDVFHQNEVEQSTYNFEHANVDKLFELFDFYESEANRLIKLDLPLPTYEMVLKASHTFNLLDARRAISVTERQRYILRVRTLARDVAQSYLQARARLGFPMATPELRDEVLAKLEAAQ.

The protein belongs to the class-II aminoacyl-tRNA synthetase family. Tetramer of two alpha and two beta subunits.

Its subcellular location is the cytoplasm. The catalysed reaction is tRNA(Gly) + glycine + ATP = glycyl-tRNA(Gly) + AMP + diphosphate. This is Glycine--tRNA ligase alpha subunit from Pseudomonas putida (strain GB-1).